A 317-amino-acid chain; its full sequence is Apolipoprotein E (317 aa).

An N-terminal signal peptide occupies residues 1-18 (MKVLWAALLVTFLAGCQA). Repeat copies occupy residues 80–101 (ALMDETMKELKAYRSELEEQLT), 102–123 (PVAEETRARLSKELQAAQARLG), 124–145 (ADMEDVRGRLVQYRGEVQAMLG), 146–167 (QSTEELRARLASHLRKLRKRLL), 168–189 (RDADDLQKRLAVYQAGAREGAE), 190–211 (RGVSAIRERLGPLVEQGRVRAA), 212–233 (TVGSLAGQPLQERAQAWGERLR), and 234–255 (ARMEEVGGRTRDRLDEVKEQVA). The 8 X 22 AA approximate tandem repeats stretch occupies residues 80–255 (ALMDETMKEL…RLDEVKEQVA (176 aa)). Position 143 is a methionine sulfoxide (methionine 143). A Phosphoserine modification is found at serine 147. The tract at residues 158 to 168 (HLRKLRKRLLR) is LDL and other lipoprotein receptors binding. 162 to 165 (LRKR) contacts heparin. Residues 210-290 (AATVGSLAGQ…SWFEPLVEDM (81 aa)) are lipid-binding and lipoprotein association. 229-236 (GERLRARM) is a heparin binding site. Residues 266-317 (QQIRLQAEAFQARLKSWFEPLVEDMQRQWAGLVEKVQAAVGTSAAPVPSDNH) are homooligomerization. The interval 278–290 (RLKSWFEPLVEDM) is specificity for association with VLDL.

The protein belongs to the apolipoprotein A1/A4/E family. As to quaternary structure, homotetramer. May interact with ABCA1; functionally associated with ABCA1 in the biogenesis of HDLs. May interact with APP/A4 amyloid-beta peptide; the interaction is extremely stable in vitro but its physiological significance is unclear. May interact with MAPT. May interact with MAP2. In the cerebrospinal fluid, interacts with secreted SORL1. Interacts with PMEL; this allows the loading of PMEL luminal fragment on ILVs to induce fibril nucleation. APOE exists as multiple glycosylated and sialylated glycoforms within cells and in plasma. The extent of glycosylation and sialylation are tissue and context specific. In terms of processing, glycated in plasma VLDL. Post-translationally, phosphorylated by FAM20C in the extracellular medium.

Its subcellular location is the secreted. It localises to the extracellular space. It is found in the extracellular matrix. The protein localises to the extracellular vesicle. The protein resides in the endosome. Its subcellular location is the multivesicular body. APOE is an apolipoprotein, a protein associating with lipid particles, that mainly functions in lipoprotein-mediated lipid transport between organs via the plasma and interstitial fluids. APOE is a core component of plasma lipoproteins and is involved in their production, conversion and clearance. Apolipoproteins are amphipathic molecules that interact both with lipids of the lipoprotein particle core and the aqueous environment of the plasma. As such, APOE associates with chylomicrons, chylomicron remnants, very low density lipoproteins (VLDL) and intermediate density lipoproteins (IDL) but shows a preferential binding to high-density lipoproteins (HDL). It also binds a wide range of cellular receptors including the LDL receptor/LDLR, the LDL receptor-related proteins LRP1, LRP2 and LRP8 and the very low-density lipoprotein receptor/VLDLR that mediate the cellular uptake of the APOE-containing lipoprotein particles. Finally, APOE also has a heparin-binding activity and binds heparan-sulfate proteoglycans on the surface of cells, a property that supports the capture and the receptor-mediated uptake of APOE-containing lipoproteins by cells. A main function of APOE is to mediate lipoprotein clearance through the uptake of chylomicrons, VLDLs, and HDLs by hepatocytes. APOE is also involved in the biosynthesis by the liver of VLDLs as well as their uptake by peripheral tissues ensuring the delivery of triglycerides and energy storage in muscle, heart and adipose tissues. By participating in the lipoprotein-mediated distribution of lipids among tissues, APOE plays a critical role in plasma and tissues lipid homeostasis. APOE is also involved in two steps of reverse cholesterol transport, the HDLs-mediated transport of cholesterol from peripheral tissues to the liver, and thereby plays an important role in cholesterol homeostasis. First, it is functionally associated with ABCA1 in the biogenesis of HDLs in tissues. Second, it is enriched in circulating HDLs and mediates their uptake by hepatocytes. APOE also plays an important role in lipid transport in the central nervous system, regulating neuron survival and sprouting. The chain is Apolipoprotein E (APOE) from Hylobates lar (Lar gibbon).